The sequence spans 449 residues: MSPAGEHGTAAPIEILPVAGLPEFRPGDDLGAAVAKAAPWLRDGDVVVVTSKAVSKCEGRLVPAPADPEERDRLRRKLVDEEAVRVLARKGRTLITENRHGLVQAAAGVDGSNVGRDELALLPLDPDASAAALRARLRELLGVEVAVLVTDTMGRAWRNGQTDAAVGAAGLAVLHGYSGAVDQHGNELLVTEVAIADEIAAAADLVKGKLTAMPVAVVRGLSVTDDGSTARQLLRPGTEDLFWLGTAEAIELGRRQAQLLRRSVRRFSAEPVPAELVREAVAEALTAPAPHHTRPVRFVWLQTPAVRTRLLDAMKDKWRADLAGDGRPAESIERRVARGQILYDAPEVVIPMLVPDGAHSYPDAARTDAEHTMFTVAVGAAVQALLVGLAVRGLGSCWIGSTIFAADLVRAVLGLPADWEPLGAIAIGYAAEPAGPRDPADPGDLLIRK.

Residues 1–245 (MSPAGEHGTA…PGTEDLFWLG (245 aa)) form a coenzyme F420:L-glutamate ligase region. GTP contacts are provided by residues 21–24 (LPEF), Ser-51, and Lys-56. Asp-110 lines the a divalent metal cation pocket. GTP is bound at residue Asn-113. 2 residues coordinate a divalent metal cation: Asp-151 and Thr-152. A dehydro-coenzyme F420-0 reductase region spans residues 246-449 (TAEAIELGRR…ADPGDLLIRK (204 aa)). Residues 261–265 (RRSVR) and Ala-289 contribute to the FMN site. Asp-321 contacts coenzyme F420-(gamma-Glu)n. 2 residues coordinate FMN: Gly-400 and Arg-437.

The protein in the N-terminal section; belongs to the CofE family. Requires Mg(2+) as cofactor. It depends on Mn(2+) as a cofactor. K(+) is required as a cofactor.

The enzyme catalyses oxidized coenzyme F420-0 + GTP + L-glutamate = oxidized coenzyme F420-1 + GDP + phosphate + H(+). The catalysed reaction is oxidized coenzyme F420-1 + GTP + L-glutamate = oxidized coenzyme F420-2 + GDP + phosphate + H(+). It carries out the reaction oxidized coenzyme F420-(gamma-L-Glu)(n) + GTP + L-glutamate = oxidized coenzyme F420-(gamma-L-Glu)(n+1) + GDP + phosphate + H(+). It catalyses the reaction oxidized coenzyme F420-0 + FMN + H(+) = dehydro coenzyme F420-0 + FMNH2. The protein operates within cofactor biosynthesis; coenzyme F420 biosynthesis. Its function is as follows. Bifunctional enzyme that catalyzes the GTP-dependent successive addition of multiple gamma-linked L-glutamates to the L-lactyl phosphodiester of 7,8-didemethyl-8-hydroxy-5-deazariboflavin (F420-0) to form polyglutamated F420 derivatives, and the FMNH2-dependent reduction of dehydro-F420-0 to form F420-0. The protein is Bifunctional F420 biosynthesis protein FbiB of Mycobacterium avium (strain 104).